The sequence spans 200 residues: Snake venom metalloproteinase hemorrhagic factor 2 (200 aa).

One can recognise a Peptidase M12B domain in the interval 4–200 (KYIELVVVAD…RKPQCILNKP (197 aa)). Residue glutamate 7 participates in Ca(2+) binding. Asparagine 70 is a glycosylation site (N-linked (GlcNAc...) asparagine). Aspartate 91 is a Ca(2+) binding site. 3 disulfide bridges follow: cysteine 115/cysteine 195, cysteine 155/cysteine 179, and cysteine 157/cysteine 162. Histidine 140 serves as a coordination point for Zn(2+). Glutamate 141 is a catalytic residue. Zn(2+)-binding residues include histidine 144 and histidine 150. Positions 195 and 198 each coordinate Ca(2+).

Belongs to the venom metalloproteinase (M12B) family. P-I subfamily. In terms of assembly, monomer. The cofactor is Zn(2+). In terms of tissue distribution, expressed by the venom gland.

It is found in the secreted. Its function is as follows. Snake venom zinc metalloproteinase that induces weak hemorrhage and mild myonecrosis. Shows mild myotoxicity by killing myocytes. Also induces edema in the mouse footpad at doses where hemorrhage is absent. In vitro, degrades laminin, fibronectin, and type IV collagen, suggesting this toxin play a role in local tissue damage by degrading extracellular matrix, and possibly by degrading muscle extracellular matrix. Hemorrhage is not due to cytotoxicity towards endothelial cells in culture, and may only play a minor role in local bleeding characteristic of L.muta envenomations. Also induces the synthesis of several endogenous matrix metalloproteinases, which in turn, may participate in extracellular matrix degradation. This chain is Snake venom metalloproteinase hemorrhagic factor 2, found in Lachesis muta muta (Bushmaster).